A 167-amino-acid chain; its full sequence is SLRECELYVQKTDSREDEISPPPPNPVVKRGAISAEVYTEEDAASYVRNVLFSHLDDNERILMGSTLRMYEEFLSKVSILESLDKLTVADALEPVQFEDGQKIVVQGEPGDEFFIILEGTAAVLQRRSENEEFVEVGRLGPSDYFGEIALLMNRPRVLGPCSDILKR.

Threonine 12 is modified (phosphothreonine). Residues serine 14 and serine 20 each carry the phosphoserine modification. Positions 30 to 33 match the Pseudophosphorylation motif motif; it reads RGAI. Phosphoserine is present on serine 34. Residues 51–78, 79–167, glutamate 147, and arginine 156 contribute to the 3',5'-cyclic AMP site; these read LFSHLDDNERILMGSTLRMYEEFLSKVS and ILES…ILKR. Serine 82 carries the phosphoserine modification.

This sequence belongs to the cAMP-dependent kinase regulatory chain family. In terms of assembly, the inactive holoenzyme is composed of two regulatory chains and two catalytic chains. Activation by cAMP releases the two active catalytic monomers and the regulatory dimer. Interacts with PRKACA and PRKACB. PRKAR1A also interacts with RFC2; the complex may be involved in cell survival. Interacts with AKAP4. Interacts with RARA; the interaction occurs in the presence of cAMP or FSH and regulates RARA transcriptional activity. Interacts with the phosphorylated form of PJA2. Interacts with CBFA2T3. Interacts with PRKX; regulates this cAMP-dependent protein kinase. Interacts with smAKAP; this interaction may target PRKAR1A to the plasma membrane. Interacts with AICDA. In terms of processing, the pseudophosphorylation site binds to the substrate-binding region of the catalytic chain, resulting in the inhibition of its activity.

It is found in the cell membrane. Functionally, regulatory subunit of the cAMP-dependent protein kinases involved in cAMP signaling in cells. The polypeptide is cAMP-dependent protein kinase type I-alpha regulatory subunit (Mesocricetus auratus (Golden hamster)).